Reading from the N-terminus, the 328-residue chain is Type II secretion system protein K (328 aa).

A propeptide spans 1–7 (MRSRQRG) (leader sequence). The chain crosses the membrane as a helical span at residues 8–28 (AALLVVLLILALMVTIAAVIT). At 29 to 328 (ERTGKAFLRT…QYGGYRTVNP (300 aa)) the chain is on the periplasmic side.

This sequence belongs to the GSP K family. Type II secretion is composed of four main components: the outer membrane complex, the inner membrane complex, the cytoplasmic secretion ATPase and the periplasm-spanning pseudopilus. Interacts with core component OutG. Cleaved by prepilin peptidase.

The protein localises to the cell inner membrane. Its function is as follows. Component of the type II secretion system required for the energy-dependent secretion of extracellular factors such as proteases and toxins from the periplasm. Plays a role in pseudopilus assembly and seems to control its length. Interacts with the pseudopilus tip complex that is critical for the recognition and binding of secretion substrates. The sequence is that of Type II secretion system protein K (outK) from Pectobacterium carotovorum subsp. carotovorum (Erwinia carotovora subsp. carotovora).